Consider the following 66-residue polypeptide: Metallothionein-like protein type 3 (66 aa).

This sequence belongs to the metallothionein superfamily. Type 15 family.

Functionally, metallothioneins have a high content of cysteine residues that bind various heavy metals. The polypeptide is Metallothionein-like protein type 3 (MT2) (Malus domestica (Apple)).